The chain runs to 123 residues: MAQGEIVPRPSPFDGLPENCISNIISFTTPRDACFAASVSKAFESAVQSDSVWEKFLPLDYSSLVPESRVFLSKKELCFSLCRVPLLIEGGKKSFWLDKTSGEKCIMLSPKGMVISWVNSPQF.

Residues 10–56 (PSPFDGLPENCISNIISFTTPRDACFAASVSKAFESAVQSDSVWEKF) form the F-box domain.

This Arabidopsis thaliana (Mouse-ear cress) protein is F-box protein PP2-B3 (PP2B3).